Here is a 318-residue protein sequence, read N- to C-terminus: Replication factor C small subunit (318 aa).

Position 43 to 50 (43 to 50) interacts with ATP; sequence GSVGTGKT.

It belongs to the activator 1 small subunits family. RfcS subfamily. Heteromultimer composed of small subunits (RfcS) and large subunits (RfcL).

Its function is as follows. Part of the RFC clamp loader complex which loads the PCNA sliding clamp onto DNA. This chain is Replication factor C small subunit, found in Thermoplasma acidophilum (strain ATCC 25905 / DSM 1728 / JCM 9062 / NBRC 15155 / AMRC-C165).